The sequence spans 455 residues: GTPase Der (455 aa).

EngA-type G domains are found at residues 4 to 169 and 178 to 353; these read PVVA…PPKD and IQMS…EQHR. Residues 10–17, 57–61, 120–123, 184–191, 231–235, and 296–299 contribute to the GTP site; these read GRPNVGKS, DTGGL, NKCE, DTAGI, and NKWD. Residues 354 to 439 form the KH-like domain; that stretch reads RRVTTSVVNE…PLKLFWRGKQ (86 aa).

This sequence belongs to the TRAFAC class TrmE-Era-EngA-EngB-Septin-like GTPase superfamily. EngA (Der) GTPase family. Associates with the 50S ribosomal subunit.

In terms of biological role, GTPase that plays an essential role in the late steps of ribosome biogenesis. The chain is GTPase Der from Synechococcus sp. (strain CC9902).